Consider the following 273-residue polypeptide: Formamidopyrimidine-DNA glycosylase (273 aa).

The active-site Schiff-base intermediate with DNA is proline 2. Glutamate 3 serves as the catalytic Proton donor. The active-site Proton donor; for beta-elimination activity is the lysine 58. DNA-binding residues include histidine 92, arginine 111, and lysine 153. The segment at 238–272 (KVYGREGQSCLSCSSTIIKIKHSGRSTFYCKTCQY) adopts an FPG-type zinc-finger fold. Arginine 262 (proton donor; for delta-elimination activity) is an active-site residue.

Belongs to the FPG family. Monomer. It depends on Zn(2+) as a cofactor.

It catalyses the reaction Hydrolysis of DNA containing ring-opened 7-methylguanine residues, releasing 2,6-diamino-4-hydroxy-5-(N-methyl)formamidopyrimidine.. The enzyme catalyses 2'-deoxyribonucleotide-(2'-deoxyribose 5'-phosphate)-2'-deoxyribonucleotide-DNA = a 3'-end 2'-deoxyribonucleotide-(2,3-dehydro-2,3-deoxyribose 5'-phosphate)-DNA + a 5'-end 5'-phospho-2'-deoxyribonucleoside-DNA + H(+). Functionally, involved in base excision repair of DNA damaged by oxidation or by mutagenic agents. Acts as a DNA glycosylase that recognizes and removes damaged bases. Has a preference for oxidized purines, such as 7,8-dihydro-8-oxoguanine (8-oxoG). Has AP (apurinic/apyrimidinic) lyase activity and introduces nicks in the DNA strand. Cleaves the DNA backbone by beta-delta elimination to generate a single-strand break at the site of the removed base with both 3'- and 5'-phosphates. The protein is Formamidopyrimidine-DNA glycosylase of Rickettsia africae (strain ESF-5).